The following is a 200-amino-acid chain: GTP cyclohydrolase 1 (200 aa).

3 residues coordinate Zn(2+): Cys-87, His-90, and Cys-158.

It belongs to the GTP cyclohydrolase I family. Toroid-shaped homodecamer, composed of two pentamers of five dimers.

The catalysed reaction is GTP + H2O = 7,8-dihydroneopterin 3'-triphosphate + formate + H(+). Its pathway is cofactor biosynthesis; 7,8-dihydroneopterin triphosphate biosynthesis; 7,8-dihydroneopterin triphosphate from GTP: step 1/1. The polypeptide is GTP cyclohydrolase 1 (Xanthomonas axonopodis pv. citri (strain 306)).